Here is a 655-residue protein sequence, read N- to C-terminus: p-hydroxybenzoic acid efflux pump subunit AaeB (655 aa).

Residues 1 to 12 (MGIFSIANQHIR) lie on the Periplasmic side of the membrane. Residues 13 to 33 (FAVKLATAIVLALFVGFHFQL) form a helical membrane-spanning segment. Residues 34-37 (ETPR) are Cytoplasmic-facing. A helical transmembrane segment spans residues 38–58 (WAVLTAAIVAAGPAFAAGGEP). Residues 59–68 (YSGAIRYRGF) are Periplasmic-facing. A helical transmembrane segment spans residues 69–89 (LRIIGTFIGCIAGLVIIIAMI). Over 90-92 (RAP) the chain is Cytoplasmic. A helical membrane pass occupies residues 93-113 (LLMILVCCIWAGFCTWISSLV). Residues 114-120 (RIENSYA) are Periplasmic-facing. Residues 121–141 (WGLAGYTALIIVITIQPEPLL) form a helical membrane-spanning segment. At 142-151 (TPQFAVERCS) the chain is on the cytoplasmic side. A helical transmembrane segment spans residues 152–172 (EIVIGIVCAIMADLLFSPRSI). The Periplasmic portion of the chain corresponds to 173-369 (KQEVDRELES…RTTLSCILGT (197 aa)). A helical transmembrane segment spans residues 370–390 (LFWLWTGWTSGSGAMVMIAVV). The Cytoplasmic segment spans residues 391-406 (TSLAMRLPNPRMVAID). Residues 407-427 (FIYGTLAALPLGLLYFLVIIP) traverse the membrane as a helical segment. Over 428–430 (NTQ) the chain is Periplasmic. The helical transmembrane segment at 431-451 (QSMLLLCISLAVLGFFLGIEV) threads the bilayer. The Cytoplasmic portion of the chain corresponds to 452–458 (QKRRLGS). A helical membrane pass occupies residues 459 to 479 (MGALASTINIIVLDNPMTFHF). Residues 480-481 (SQ) lie on the Periplasmic side of the membrane. Residues 482 to 502 (FLDSALGQIVGCVLAFTVILL) form a helical membrane-spanning segment. Over 503–655 (VRDKSRDRTG…HKYQHALTDS (153 aa)) the chain is Cytoplasmic.

It belongs to the aromatic acid exporter ArAE (TC 2.A.85) family.

The protein localises to the cell inner membrane. Forms an efflux pump with AaeA. Could function as a metabolic relief valve, allowing to eliminate certain compounds when they accumulate to high levels in the cell. This Escherichia coli O6:H1 (strain CFT073 / ATCC 700928 / UPEC) protein is p-hydroxybenzoic acid efflux pump subunit AaeB.